A 209-amino-acid polypeptide reads, in one-letter code: Small ribosomal subunit protein uS4 (209 aa).

The Zn(2+) site is built by cysteine 9, cysteine 12, cysteine 26, and cysteine 31. Residues 9 to 31 (CKLCRREGMKLYLKGERCYTDKC) form a C4-type zinc finger. In terms of domain architecture, S4 RNA-binding spans 98–161 (ARLDNVVYRM…RDLEVIKKAI (64 aa)).

The protein belongs to the universal ribosomal protein uS4 family. In terms of assembly, part of the 30S ribosomal subunit. Contacts protein S5. The interaction surface between S4 and S5 is involved in control of translational fidelity. Requires Zn(2+) as cofactor.

In terms of biological role, one of the primary rRNA binding proteins, it binds directly to 16S rRNA where it nucleates assembly of the body of the 30S subunit. Its function is as follows. With S5 and S12 plays an important role in translational accuracy. The polypeptide is Small ribosomal subunit protein uS4 (rpsD) (Thermotoga maritima (strain ATCC 43589 / DSM 3109 / JCM 10099 / NBRC 100826 / MSB8)).